Here is a 345-residue protein sequence, read N- to C-terminus: NADPH dehydrogenase (345 aa).

23–26 is an FMN binding site; that stretch reads SPMC. Tyr-28 contacts substrate. FMN is bound by residues Ala-60 and Gln-102. 164-167 is a binding site for substrate; that stretch reads HGAH. FMN contacts are provided by residues Arg-215 and 307 to 308; that span reads GR.

The protein belongs to the NADH:flavin oxidoreductase/NADH oxidase family. NamA subfamily. Homotetramer. The cofactor is FMN.

The enzyme catalyses A + NADPH + H(+) = AH2 + NADP(+). Catalyzes the reduction of the double bond of an array of alpha,beta-unsaturated aldehydes and ketones. It also reduces the nitro group of nitroester and nitroaromatic compounds. It could have a role in detoxification processes. The chain is NADPH dehydrogenase from Bacillus anthracis (strain CDC 684 / NRRL 3495).